The sequence spans 414 residues: Putative competence-damage inducible protein (414 aa).

It belongs to the CinA family.

The polypeptide is Putative competence-damage inducible protein (Listeria monocytogenes serovar 1/2a (strain ATCC BAA-679 / EGD-e)).